Reading from the N-terminus, the 120-residue chain is NAD(P)H-quinone oxidoreductase subunit 3, chloroplastic (120 aa).

Transmembrane regions (helical) follow at residues 10 to 30 (FWVF…ISGV), 64 to 84 (IFAL…PWAM), and 88 to 108 (VLGV…IVGS).

Belongs to the complex I subunit 3 family. As to quaternary structure, NDH is composed of at least 16 different subunits, 5 of which are encoded in the nucleus.

It localises to the plastid. Its subcellular location is the chloroplast thylakoid membrane. The catalysed reaction is a plastoquinone + NADH + (n+1) H(+)(in) = a plastoquinol + NAD(+) + n H(+)(out). It carries out the reaction a plastoquinone + NADPH + (n+1) H(+)(in) = a plastoquinol + NADP(+) + n H(+)(out). Its function is as follows. NDH shuttles electrons from NAD(P)H:plastoquinone, via FMN and iron-sulfur (Fe-S) centers, to quinones in the photosynthetic chain and possibly in a chloroplast respiratory chain. The immediate electron acceptor for the enzyme in this species is believed to be plastoquinone. Couples the redox reaction to proton translocation, and thus conserves the redox energy in a proton gradient. In Pelargonium hortorum (Common geranium), this protein is NAD(P)H-quinone oxidoreductase subunit 3, chloroplastic.